Consider the following 472-residue polypeptide: Bifunctional protein HldE (472 aa).

The ribokinase stretch occupies residues 1-315 (MAKRVKILVV…QLLNSSFGAN (315 aa)). 192–195 (NKKE) is a binding site for ATP. The active site involves Asp260. Residues 340-472 (FTNGCFDILH…IKDAKNDDKK (133 aa)) are cytidylyltransferase.

This sequence in the N-terminal section; belongs to the carbohydrate kinase PfkB family. In the C-terminal section; belongs to the cytidylyltransferase family. In terms of assembly, homodimer.

The enzyme catalyses D-glycero-beta-D-manno-heptose 7-phosphate + ATP = D-glycero-beta-D-manno-heptose 1,7-bisphosphate + ADP + H(+). The catalysed reaction is D-glycero-beta-D-manno-heptose 1-phosphate + ATP + H(+) = ADP-D-glycero-beta-D-manno-heptose + diphosphate. It participates in nucleotide-sugar biosynthesis; ADP-L-glycero-beta-D-manno-heptose biosynthesis; ADP-L-glycero-beta-D-manno-heptose from D-glycero-beta-D-manno-heptose 7-phosphate: step 1/4. Its pathway is nucleotide-sugar biosynthesis; ADP-L-glycero-beta-D-manno-heptose biosynthesis; ADP-L-glycero-beta-D-manno-heptose from D-glycero-beta-D-manno-heptose 7-phosphate: step 3/4. Catalyzes the phosphorylation of D-glycero-D-manno-heptose 7-phosphate at the C-1 position to selectively form D-glycero-beta-D-manno-heptose-1,7-bisphosphate. Functionally, catalyzes the ADP transfer from ATP to D-glycero-beta-D-manno-heptose 1-phosphate, yielding ADP-D-glycero-beta-D-manno-heptose. This Campylobacter concisus (strain 13826) protein is Bifunctional protein HldE.